Reading from the N-terminus, the 304-residue chain is UDP-N-acetylenolpyruvoylglucosamine reductase (304 aa).

The region spanning 31–196 (RVGGPAERFY…VAAELELAPG (166 aa)) is the FAD-binding PCMH-type domain. Residue Arg176 is part of the active site. The Proton donor role is filled by Ser225. Residue Glu295 is part of the active site.

It belongs to the MurB family. FAD is required as a cofactor.

The protein localises to the cytoplasm. The catalysed reaction is UDP-N-acetyl-alpha-D-muramate + NADP(+) = UDP-N-acetyl-3-O-(1-carboxyvinyl)-alpha-D-glucosamine + NADPH + H(+). It functions in the pathway cell wall biogenesis; peptidoglycan biosynthesis. In terms of biological role, cell wall formation. This is UDP-N-acetylenolpyruvoylglucosamine reductase from Methylococcus capsulatus (strain ATCC 33009 / NCIMB 11132 / Bath).